A 91-amino-acid polypeptide reads, in one-letter code: N(2)-fixation sustaining protein CowN (91 aa).

The protein belongs to the CowN family.

Is required to sustain N(2)-dependent growth in the presence of low levels of carbon monoxide (CO). Probably acts by protecting the N(2) fixation ability of the nitrogenase complex, which is inactivated in the presence of CO. This is N(2)-fixation sustaining protein CowN from Gluconacetobacter diazotrophicus (strain ATCC 49037 / DSM 5601 / CCUG 37298 / CIP 103539 / LMG 7603 / PAl5).